The chain runs to 2582 residues: Chromodomain-helicase-DNA-binding protein 8 (2582 aa).

4 disordered regions span residues 22–111 (DDSF…PVLQ), 136–155 (MGVS…PSQS), 253–283 (VKGS…TQGE), and 349–377 (QKIQ…PLTL). Composition is skewed to polar residues over residues 42-51 (SLDSLDQMNQ), 94-111 (DYTT…PVLQ), and 141-155 (TGVS…PSQS). A compositionally biased stretch (low complexity) spans 255-267 (GSAPAGNPGAAGP). Residues 355-372 (PQPPSSQPQPQPQPPPSA) show a composition bias toward pro residues. Ser434 carries the phosphoserine modification. Disordered stretches follow at residues 475–585 (RARG…VKRK) and 598–617 (DEEE…PILP). Basic and acidic residues predominate over residues 495-518 (RPEEEGEKKRRKKSSGERLKEEKP). Phosphoserine occurs at positions 555 and 564. Positions 574–585 (QKRRSNRQVKRK) are enriched in basic residues. Residue Lys611 forms a Glycyl lysine isopeptide (Lys-Gly) (interchain with G-Cter in SUMO) linkage. Chromo domains lie at 644-711 (AIVD…AQMR) and 726-792 (VEVD…RVNR). The region spanning 825-999 (LFNWYNRQNC…FSLLHFLEPS (175 aa)) is the Helicase ATP-binding domain. Position 838 to 845 (838 to 845 (DEMGLGKT)) interacts with ATP. The DEAH box signature appears at 950-953 (DEAH). One can recognise a Helicase C-terminal domain in the interval 1139 to 1290 (LIDKLLPKLK…KAVLQSMSGR (152 aa)). 2 positions are modified to phosphoserine: Ser1422 and Ser1426. Residues 1694 to 1715 (EDPEYKPLQGPPKDPDDEGDPL) form a disordered region. Residues 1791–2304 (IARREKQQRW…LVELEVECME (514 aa)) are interaction with FAM124B. Ser1978 and Ser1980 each carry phosphoserine. Positions 1990–2019 (QCTSRTASPSPLRPDAPVEKSPEESTVQVP) are disordered. The residue at position 1995 (Thr1995) is a Phosphothreonine. Ser1997, Ser1999, and Ser2010 each carry phosphoserine. Residue Lys2027 forms a Glycyl lysine isopeptide (Lys-Gly) (interchain with G-Cter in SUMO2) linkage. Phosphoserine occurs at positions 2040, 2070, and 2072. Positions 2045-2120 (VRVGSSDTAP…RSRPKLYDEE (76 aa)) are disordered. A compositionally biased stretch (acidic residues) spans 2065–2074 (EDEDDSDSEL). The span at 2077–2096 (SKLSPSSSSSSSSSSSSSST) shows a compositional bias: low complexity. Residues 2104–2118 (EEKLTADRSRPKLYD) are compositionally biased toward basic and acidic residues. 3 positions are modified to phosphoserine: Ser2184, Ser2202, and Ser2204. Positions 2187–2233 (VTAGGILGPGNHLLDSPSLTPGEDGDSPVPTPRSGSAASMAEEEASA) are disordered. At Thr2206 the chain carries Phosphothreonine. Ser2213 is modified (phosphoserine). The residue at position 2217 (Thr2217) is a Phosphothreonine. Residues 2222–2233 (SAASMAEEEASA) are compositionally biased toward low complexity. At Ser2225 the chain carries Phosphoserine. Residue Lys2258 forms a Glycyl lysine isopeptide (Lys-Gly) (interchain with G-Cter in SUMO2) linkage. The disordered stretch occupies residues 2486–2582 (HVDSSTMLHH…NSDSSEDADD (97 aa)). Basic residues predominate over residues 2493 to 2511 (LHHHHHHPHPHHHHHHHPG). A compositionally biased stretch (low complexity) spans 2514 to 2529 (TTGYPSSPATTTSGTA). Ser2520 carries the post-translational modification Phosphoserine. Over residues 2537–2551 (PEDDDEEEDEEDDDL) the composition is skewed to acidic residues.

This sequence belongs to the SNF2/RAD54 helicase family. CHD8 subfamily. In terms of assembly, interacts with CTNNB1 and PIAS3. Component of some MLL1/MLL complex, at least composed of the core components KMT2A/MLL1, ASH2L, HCFC1/HCF1, WDR5 and RBBP5, as well as the facultative components BACC1, CHD8, E2F6, HSP70, INO80C, KANSL1, LAS1L, MAX, MCRS1, MGA, KAT8/MOF, PELP1, PHF20, PRP31, RING2, RUVB1/TIP49A, RUVB2/TIP49B, SENP3, TAF1, TAF4, TAF6, TAF7, TAF9 and TEX10. Interacts with CHD7. Interacts with FAM124B. Interacts with p53/TP53 and histone H1. Interacts with CTCF. Interacts with TLK2. Interacts with HNRNPL in an RNA-dependent manner. Post-translationally, sumoylated.

The protein resides in the nucleus. It catalyses the reaction ATP + H2O = ADP + phosphate + H(+). ATP-dependent chromatin-remodeling factor, it slides nucleosomes along DNA; nucleosome sliding requires ATP. Acts as a transcription repressor by remodeling chromatin structure and recruiting histone H1 to target genes. Suppresses p53/TP53-mediated apoptosis by recruiting histone H1 and preventing p53/TP53 transactivation activity. Acts as a negative regulator of Wnt signaling pathway by regulating beta-catenin (CTNNB1) activity. Negatively regulates CTNNB1-targeted gene expression by being recruited specifically to the promoter regions of several CTNNB1 responsive genes. Involved in both enhancer blocking and epigenetic remodeling at chromatin boundary via its interaction with CTCF. Acts as a suppressor of STAT3 activity by suppressing the LIF-induced STAT3 transcriptional activity. Also acts as a transcription activator via its interaction with ZNF143 by participating in efficient U6 RNA polymerase III transcription. Regulates alternative splicing of a core group of genes involved in neuronal differentiation, cell cycle and DNA repair. Enables H3K36me3-coupled transcription elongation and co-transcriptional RNA processing likely via interaction with HNRNPL. This chain is Chromodomain-helicase-DNA-binding protein 8, found in Mus musculus (Mouse).